Consider the following 1083-residue polypeptide: Solute carrier family 12 member 7 (1083 aa).

Residues 1 to 55 (MPTNFTVVPVEARADGAGDEAAERTEEPESPESVDQTSPTPGDGNPRENSPFINN) form a disordered region. The Cytoplasmic portion of the chain corresponds to 1 to 119 (MPTNFTVVPV…RREVKAPRMG (119 aa)). The segment covering 12 to 27 (ARADGAGDEAAERTEE) has biased composition (basic and acidic residues). Phosphoserine is present on residues S30 and S33. The residue at position 37 (T37) is a Phosphothreonine. S50 and S62 each carry phosphoserine. A discontinuously helical membrane pass occupies residues 120 to 142 (TFIGVYLPCLQNILGVILFLRLT). N131 and I132 together coordinate K(+). V135 is a chloride binding site. Residues 143-149 (WIVGAAG) are Extracellular-facing. The chain crosses the membrane as a helical span at residues 150 to 172 (VMESFLIVAMCCTCTMLTAISMS). The Cytoplasmic segment spans residues 173-196 (AIATNGVVPAGGSYYMISRSLGPE). A helical membrane pass occupies residues 197–225 (FGGAVGLCFYLGTTFAGAMYILGTIEIFL). Topologically, residues 226–249 (TYISPSAAIFQAETADGEAAALLN) are extracellular. Transmembrane regions (helical) follow at residues 250–271 (NMRV…VGVK) and 272–300 (YVNK…KTAF). Over 301-419 (APPDIPVCLL…PYVLTDIMTY (119 aa)) the chain is Extracellular. The N-linked (GlcNAc...) (high mannose) asparagine glycan is linked to N312. Residues N331 and N344 are each glycosylated (N-linked (GlcNAc...) (complex) asparagine). The N-linked (GlcNAc...) (high mannose) asparagine glycan is linked to N360. The helical transmembrane segment at 420-440 (FTMLVGIYFPSVTGIMAGSNR) threads the bilayer. K(+) contacts are provided by P429 and T432. P429 is a chloride binding site. Positions 433 and 434 each coordinate chloride. The Cytoplasmic segment spans residues 441 to 450 (SGDLKDAQKS). The chain crosses the membrane as a helical span at residues 451 to 473 (IPTGTILAIVTTSFIYLSCIVLF). Residues 474–504 (GACIEGVVLRDKFGEALQGNLVIGMLAWPSP) lie on the Extracellular side of the membrane. A helical membrane pass occupies residues 505 to 531 (WVIVIGSFFSTCGAGLQSLTGAPRLLQ). Topologically, residues 532–554 (AIARDGIIPFLQVFGHGKANGEP) are cytoplasmic. 2 helical membrane-spanning segments follow: residues 555 to 573 (TWAL…LIAS) and 574 to 598 (LDSV…ACAV). Y589 contributes to the chloride binding site. Topologically, residues 599–612 (QTLLRTPNWRPRFK) are cytoplasmic. Transmembrane regions (helical) follow at residues 613 to 635 (FYHW…ICSW) and 636 to 651 (YYAL…IYKY). At 652 to 1083 (IEYRGAEKEW…GGREVITIYS (432 aa)) the chain is on the cytoplasmic side. The tract at residues 664-680 (GIRGLSLNAARYALLRV) is scissor helix. A phosphothreonine mark is found at T973 and T980.

It belongs to the SLC12A transporter family. K/Cl co-transporter subfamily. As to quaternary structure, homodimer; adopts a domain-swap conformation at the scissor helices connecting the transmembrane domain and C-terminal domain. Heterodimer with K-Cl cotransporter SLC12A5. Post-translationally, glycosylation at Asn-331 and Asn-344 is required for proper trafficking to the cell surface, and augments protein stability. As to expression, detected in proximal tubules in the kidney, in particular in basolateral membranes of intercalated cells in the cortical collecting duct.

It localises to the cell membrane. The enzyme catalyses K(+)(in) + chloride(in) = K(+)(out) + chloride(out). Activated by N-ethylmaleimide (NEM). Inhibited by furosemide, DIDS and bumetanide. The inhibition is much stronger in the presence of 50 mM K(+) in the uptake medium. Inhibited by DIOA. Inhibited by WNK3. Its function is as follows. Mediates electroneutral potassium-chloride cotransport when activated by cell swelling. May mediate K(+) uptake into Deiters' cells in the cochlea and contribute to K(+) recycling in the inner ear. Important for the survival of cochlear outer and inner hair cells and the maintenance of the organ of Corti. May be required for basolateral Cl(-) extrusion in the kidney and contribute to renal acidification. The sequence is that of Solute carrier family 12 member 7 (Slc12a7) from Mus musculus (Mouse).